Reading from the N-terminus, the 591-residue chain is L-fucose isomerase (591 aa).

Residues glutamate 337 and aspartate 361 each act as proton acceptor in the active site. 3 residues coordinate Mn(2+): glutamate 337, aspartate 361, and histidine 528.

Belongs to the L-fucose isomerase family. Homohexamer. Mn(2+) is required as a cofactor.

It is found in the cytoplasm. It catalyses the reaction L-fucose = L-fuculose. Its pathway is carbohydrate degradation; L-fucose degradation; L-lactaldehyde and glycerone phosphate from L-fucose: step 1/3. In terms of biological role, converts the aldose L-fucose into the corresponding ketose L-fuculose. This chain is L-fucose isomerase, found in Salmonella typhi.